Consider the following 741-residue polypeptide: NAD(P)H-quinone oxidoreductase subunit 5, chloroplastic (741 aa).

Transmembrane regions (helical) follow at residues 9–29, 40–60, 89–109, 125–145, 147–167, 185–205, 219–239, 258–278, 284–304, 327–347, 354–374, 396–416, 425–445, 549–569, 605–625, and 721–741; these read WIIP…LLLF, WAFQ…NLSI, IDPL…MVLI, FAYM…SNLI, IYIF…FWFT, GDFG…SFEF, NEVN…GAIA, TPIS…FPVA, FIVI…TVFF, LGYM…FHLI, ALLF…VGYC, NSFL…CFWS, WLYS…TAFY, LFPI…GIPF, VFSV…YKPV, and YLFF…FLNL.

It belongs to the complex I subunit 5 family. NDH is composed of at least 16 different subunits, 5 of which are encoded in the nucleus.

The protein localises to the plastid. The protein resides in the chloroplast thylakoid membrane. It catalyses the reaction a plastoquinone + NADH + (n+1) H(+)(in) = a plastoquinol + NAD(+) + n H(+)(out). It carries out the reaction a plastoquinone + NADPH + (n+1) H(+)(in) = a plastoquinol + NADP(+) + n H(+)(out). Functionally, NDH shuttles electrons from NAD(P)H:plastoquinone, via FMN and iron-sulfur (Fe-S) centers, to quinones in the photosynthetic chain and possibly in a chloroplast respiratory chain. The immediate electron acceptor for the enzyme in this species is believed to be plastoquinone. Couples the redox reaction to proton translocation, and thus conserves the redox energy in a proton gradient. This is NAD(P)H-quinone oxidoreductase subunit 5, chloroplastic (ndhF) from Guizotia abyssinica (Niger).